The following is a 59-amino-acid chain: Large ribosomal subunit protein bL32 (59 aa).

It belongs to the bacterial ribosomal protein bL32 family.

This Rhizorhabdus wittichii (strain DSM 6014 / CCUG 31198 / JCM 15750 / NBRC 105917 / EY 4224 / RW1) (Sphingomonas wittichii) protein is Large ribosomal subunit protein bL32.